The sequence spans 348 residues: Eukaryotic translation initiation factor 3 subunit H (348 aa).

The segment at 1-25 (MASRKEGSGAAGGGFGASKGKGKAA) is disordered. Residues 9–19 (GAAGGGFGASK) show a composition bias toward gly residues. Residues 35-169 (VQIDGLVVLK…LKAYRLTPKL (135 aa)) enclose the MPN domain. Over residues 266–285 (QQQQKHQYQQRRQQENLQRQ) the composition is skewed to low complexity. The disordered stretch occupies residues 266 to 304 (QQQQKHQYQQRRQQENLQRQSRGEAPLPEEDINKLFKPP).

It belongs to the eIF-3 subunit H family. Component of the eukaryotic translation initiation factor 3 (eIF-3) complex, which is composed of 13 subunits: EIF3A, EIF3B, EIF3C, EIF3D, EIF3E, EIF3F, EIF3G, EIF3H, EIF3I, EIF3J, EIF3K, EIF3L and EIF3M.

The protein localises to the cytoplasm. Functionally, component of the eukaryotic translation initiation factor 3 (eIF-3) complex, which is involved in protein synthesis of a specialized repertoire of mRNAs and, together with other initiation factors, stimulates binding of mRNA and methionyl-tRNAi to the 40S ribosome. The eIF-3 complex specifically targets and initiates translation of a subset of mRNAs involved in cell proliferation. The protein is Eukaryotic translation initiation factor 3 subunit H of Gallus gallus (Chicken).